We begin with the raw amino-acid sequence, 570 residues long: Molecular chaperone MKKS (570 aa).

An ATP-binding site is contributed by 192–199; it reads ERMVLGKS. Positions 198 to 370 are substrate-binding apical domain; sequence KSIIVPLKGQ…FHLLPNEATV (173 aa).

Belongs to the TCP-1 chaperonin family. Component of a complex composed at least of MKKS, BBS10, BBS12, TCP1, CCT2, CCT3, CCT4, CCT5 and CCT8. Interacts with STUB1. Interacts with BBS2 (via coiled coil domain). Interacts with CCDC28B. Interacts with BBS12. Interacts with SMARCC1, a component of the SWI/SNF complexes; the interaction takes place predominantly in the cytoplasm and may modulate SMARCC1 location. Interacts with DLEC1. In terms of tissue distribution, widely expressed in adult and fetal tissues. Expressed in the developing heart, brain retina, limb buds, as well as in the developing neural tube. Expressed in the embryo in the first and second branchial arches. Expressed in parafin embedded tissue sections of brain, kidney, retina, olfactory epithelium and the ependymal layer of ventricles. Detected only in restricted regions of these tissue sections, including the ciliated border of renal tubules, the connecting cilium and the inner and outer nuclear layers of retina, and the ciliated layer of olfactory epithelia.

It localises to the cytoplasm. It is found in the cytoskeleton. The protein localises to the microtubule organizing center. Its subcellular location is the centrosome. The protein resides in the cytosol. It localises to the nucleus. In terms of biological role, probable molecular chaperone that assists the folding of proteins upon ATP hydrolysis. Plays a role in the assembly of BBSome, a complex involved in ciliogenesis regulating transports vesicles to the cilia. May play a role in protein processing in limb, cardiac and reproductive system development. May play a role in cytokinesis. This chain is Molecular chaperone MKKS (Mkks), found in Mus musculus (Mouse).